The sequence spans 395 residues: Protein BTN1 (395 aa).

Residues 1-31 form the signal peptide; the sequence is MQLEPAHLVYAAFWTFGLVNNVLYVVILTAA. 10 consecutive transmembrane segments (helical) span residues 43 to 63, 74 to 94, 96 to 116, 134 to 154, 158 to 178, 222 to 242, 261 to 278, 291 to 311, 313 to 333, and 355 to 375; these read VVLL…PFFI, LLVG…PLFL, LVGV…FLQL, GAGL…GVSV, LLVF…LLPP, PLVM…YTIN, FRDV…GVFI, IMIP…QSMS, ILPN…LGGA, and LGSV…VSLW.

This sequence belongs to the battenin family.

Its subcellular location is the vacuole membrane. Its function is as follows. Involved in vacuolar transport and vacuole pH homeostasis. Also required for cytokinesis. This is Protein BTN1 (BTN1) from Yarrowia lipolytica (strain CLIB 122 / E 150) (Yeast).